The chain runs to 205 residues: Max-like protein homolog 2 (205 aa).

2 stretches are compositionally biased toward low complexity: residues 1–12 (MSRSRSAAASSS) and 26–40 (SASS…ATNS). Residues 1–58 (MSRSRSAAASSSQKPDDMDLMSPDGSASSPSAPNTPATNSGGFSSDRKKATHLRCERQ) form a disordered region. Basic and acidic residues predominate over residues 45 to 58 (SDRKKATHLRCERQ). Positions 47-60 (RKKATHLRCERQRR) are basic motif. One can recognise a bHLH domain in the interval 47–101 (RKKATHLRCERQRREAINSGYSDLKDLIPQTTTSLGCKTTNAAILFRACDFMSQL). Positions 61 to 101 (EAINSGYSDLKDLIPQTTTSLGCKTTNAAILFRACDFMSQL) are helix-loop-helix motif. A coiled-coil region spans residues 98 to 132 (MSQLKTDISDADKQLAQLNAQAAALEMIASEYEQM).

In terms of tissue distribution, widely expressed.

Its subcellular location is the nucleus. The protein localises to the cytoplasm. The protein resides in the mitochondrion. Functionally, transcription factor. Binds to the E box motif 5'-CACGTG-3', probably in a heterodimeric complex with mml-1. Involved in modulating longevity in response to TOR signaling, dietary restriction, the decline in protein homeostasis associated with normal aging, germline signaling and the insulin-like signaling pathway. Plays a role in autophagy. Involved in regulating migration of the ray 1 precursor cells in the male tail, acting in concert with Wnt and semaphorin signaling pathways. Regulates transcription of genes encoding extracellular matrix (ECM) components which may contribute to the substratum required for migration of the neighboring ray 1 precursor cells. Required for resistance to oxidative stress. Involved in promoting infection by the microsporidian pathogen N.parisii, probably acting independently of its canonical partner, mml-1. The protein is Max-like protein homolog 2 of Caenorhabditis elegans.